We begin with the raw amino-acid sequence, 461 residues long: Ornithine decarboxylase (461 aa).

At Lys69 the chain carries N6-(pyridoxal phosphate)lysine. Pyridoxal 5'-phosphate is bound by residues Ser200, Gly237, and 274-277 (EPGR). Ser303 bears the Phosphoserine; by CK2 mark. Position 331–332 (331–332 (YD)) interacts with substrate. Cys360 acts as the Proton donor; shared with dimeric partner in catalysis. At Cys360 the chain carries S-nitrosocysteine. Substrate is bound at residue Asp361. Residue Tyr389 coordinates pyridoxal 5'-phosphate.

This sequence belongs to the Orn/Lys/Arg decarboxylase class-II family. Homodimer. Only the dimer is catalytically active, as the active sites are constructed of residues from both monomers. Does not form a heterodimer with AZIN2. It depends on pyridoxal 5'-phosphate as a cofactor. As to expression, expressed during testis development in the outer part of the seminiferous tubules.

The enzyme catalyses L-ornithine + H(+) = putrescine + CO2. Its pathway is amine and polyamine biosynthesis; putrescine biosynthesis via L-ornithine pathway; putrescine from L-ornithine: step 1/1. With respect to regulation, inhibited by antizymes (AZs) OAZ1, OAZ2 and OAZ3 in response to polyamine levels. AZs inhibit the assembly of the functional homodimer by binding to ODC monomers. Additionally, OAZ1 targets ODC monomers for ubiquitin-independent proteolytic destruction by the 26S proteasome. Catalyzes the first and rate-limiting step of polyamine biosynthesis that converts ornithine into putrescine, which is the precursor for the polyamines, spermidine and spermine. Polyamines are essential for cell proliferation and are implicated in cellular processes, ranging from DNA replication to apoptosis. The chain is Ornithine decarboxylase (Odc1) from Mus musculus (Mouse).